We begin with the raw amino-acid sequence, 471 residues long: tRNA-2-methylthio-N(6)-dimethylallyladenosine synthase (471 aa).

Residues Leu31–Asn149 form the MTTase N-terminal domain. 6 residues coordinate [4Fe-4S] cluster: Cys40, Cys76, Cys110, Cys186, Cys190, and Cys193. The Radical SAM core domain maps to Arg172–Glu402. In terms of domain architecture, TRAM spans Ala405–Glu468.

It belongs to the methylthiotransferase family. MiaB subfamily. Monomer. Requires [4Fe-4S] cluster as cofactor.

It localises to the cytoplasm. It carries out the reaction N(6)-dimethylallyladenosine(37) in tRNA + (sulfur carrier)-SH + AH2 + 2 S-adenosyl-L-methionine = 2-methylsulfanyl-N(6)-dimethylallyladenosine(37) in tRNA + (sulfur carrier)-H + 5'-deoxyadenosine + L-methionine + A + S-adenosyl-L-homocysteine + 2 H(+). In terms of biological role, catalyzes the methylthiolation of N6-(dimethylallyl)adenosine (i(6)A), leading to the formation of 2-methylthio-N6-(dimethylallyl)adenosine (ms(2)i(6)A) at position 37 in tRNAs that read codons beginning with uridine. This Thermoanaerobacter pseudethanolicus (strain ATCC 33223 / 39E) (Clostridium thermohydrosulfuricum) protein is tRNA-2-methylthio-N(6)-dimethylallyladenosine synthase.